A 131-amino-acid chain; its full sequence is Holo-[acyl-carrier-protein] synthase (131 aa).

Positions 8 and 63 each coordinate Mg(2+).

It belongs to the P-Pant transferase superfamily. AcpS family. Mg(2+) is required as a cofactor.

The protein localises to the cytoplasm. It carries out the reaction apo-[ACP] + CoA = holo-[ACP] + adenosine 3',5'-bisphosphate + H(+). Functionally, transfers the 4'-phosphopantetheine moiety from coenzyme A to a Ser of acyl-carrier-protein. The polypeptide is Holo-[acyl-carrier-protein] synthase (Shewanella piezotolerans (strain WP3 / JCM 13877)).